Here is a 206-residue protein sequence, read N- to C-terminus: Large ribosomal subunit protein uL4 (206 aa).

Residues 43–78 (NQRQGTHDTKTRAEVRGGGRKPWRQKGTGRARAGSS) are disordered. Residues 47–59 (GTHDTKTRAEVRG) are compositionally biased toward basic and acidic residues. The segment covering 60–71 (GGRKPWRQKGTG) has biased composition (basic residues).

The protein belongs to the universal ribosomal protein uL4 family. Part of the 50S ribosomal subunit.

One of the primary rRNA binding proteins, this protein initially binds near the 5'-end of the 23S rRNA. It is important during the early stages of 50S assembly. It makes multiple contacts with different domains of the 23S rRNA in the assembled 50S subunit and ribosome. Its function is as follows. Forms part of the polypeptide exit tunnel. This Desulforamulus reducens (strain ATCC BAA-1160 / DSM 100696 / MI-1) (Desulfotomaculum reducens) protein is Large ribosomal subunit protein uL4.